We begin with the raw amino-acid sequence, 378 residues long: Quinolinate synthase (378 aa).

Positions 59 and 80 each coordinate iminosuccinate. C125 contacts [4Fe-4S] cluster. Iminosuccinate contacts are provided by residues 151 to 153 (YAN) and S168. C212 contacts [4Fe-4S] cluster. Residues 238-240 (HPE) and T255 each bind iminosuccinate. C309 contributes to the [4Fe-4S] cluster binding site.

It belongs to the quinolinate synthase family. Type 1 subfamily. [4Fe-4S] cluster is required as a cofactor.

The protein resides in the cytoplasm. The enzyme catalyses iminosuccinate + dihydroxyacetone phosphate = quinolinate + phosphate + 2 H2O + H(+). The protein operates within cofactor biosynthesis; NAD(+) biosynthesis; quinolinate from iminoaspartate: step 1/1. Catalyzes the condensation of iminoaspartate with dihydroxyacetone phosphate to form quinolinate. The protein is Quinolinate synthase of Burkholderia orbicola (strain MC0-3).